A 737-amino-acid chain; its full sequence is Polyribonucleotide nucleotidyltransferase (737 aa).

Residues D514 and D520 each contribute to the Mg(2+) site. One can recognise a KH domain in the interval 580-639 (PRIITVKIPVDKIGEVIGPKGKMINQIQEDTGADITIEDDGTIYIGAQAGSQAEAARATI). In terms of domain architecture, S1 motif spans 651–723 (GERYLGTVVK…SRGKLSLIPV (73 aa)).

Belongs to the polyribonucleotide nucleotidyltransferase family. The cofactor is Mg(2+).

The protein resides in the cytoplasm. It catalyses the reaction RNA(n+1) + phosphate = RNA(n) + a ribonucleoside 5'-diphosphate. Its function is as follows. Involved in mRNA degradation. Catalyzes the phosphorolysis of single-stranded polyribonucleotides processively in the 3'- to 5'-direction. The sequence is that of Polyribonucleotide nucleotidyltransferase from Streptomyces griseus subsp. griseus (strain JCM 4626 / CBS 651.72 / NBRC 13350 / KCC S-0626 / ISP 5235).